We begin with the raw amino-acid sequence, 235 residues long: Orotidine 5'-phosphate decarboxylase (235 aa).

Substrate-binding positions include D10, K33, 60-69 (DLKMHDIPNT), T123, R185, Q194, G214, and R215. K62 serves as the catalytic Proton donor.

Belongs to the OMP decarboxylase family. Type 1 subfamily. As to quaternary structure, homodimer.

The enzyme catalyses orotidine 5'-phosphate + H(+) = UMP + CO2. The protein operates within pyrimidine metabolism; UMP biosynthesis via de novo pathway; UMP from orotate: step 2/2. In terms of biological role, catalyzes the decarboxylation of orotidine 5'-monophosphate (OMP) to uridine 5'-monophosphate (UMP). The polypeptide is Orotidine 5'-phosphate decarboxylase (Lactobacillus acidophilus (strain ATCC 700396 / NCK56 / N2 / NCFM)).